The following is a 216-amino-acid chain: LexA repressor 1 (216 aa).

Positions 38 to 58 (TRQIGAAVGLRSMSSVARHLR) form a DNA-binding region, H-T-H motif. Active-site for autocatalytic cleavage activity residues include serine 140 and lysine 177.

It belongs to the peptidase S24 family. In terms of assembly, homodimer.

It carries out the reaction Hydrolysis of Ala-|-Gly bond in repressor LexA.. Functionally, represses a number of genes involved in the response to DNA damage (SOS response), including recA and lexA. In the presence of single-stranded DNA, RecA interacts with LexA causing an autocatalytic cleavage which disrupts the DNA-binding part of LexA, leading to derepression of the SOS regulon and eventually DNA repair. The chain is LexA repressor 1 from Nocardia farcinica (strain IFM 10152).